The sequence spans 478 residues: Chromosomal replication initiator protein DnaA (478 aa).

The segment at 1 to 82 (MHTMNKTAES…ELGKNAKLLY (82 aa)) is domain I, interacts with DnaA modulators. The segment at 82-140 (YKIKMENTYGNKLPFTEQLPSAHRSPVRTQEIDVPVQQKNPELRNPFIIPGIRNLKIES) is domain II. Residues 141–358 (QLNANYSFDN…GAIISLIAQS (218 aa)) form a domain III, AAA+ region region. Residues Gly-186, Gly-188, Lys-189, and Thr-190 each contribute to the ATP site. Positions 359–478 (SFNKKEVTLE…VDDINKKLSL (120 aa)) are domain IV, binds dsDNA.

It belongs to the DnaA family. In terms of assembly, oligomerizes as a right-handed, spiral filament on DNA at oriC.

It is found in the cytoplasm. Its function is as follows. Plays an essential role in the initiation and regulation of chromosomal replication. ATP-DnaA binds to the origin of replication (oriC) to initiate formation of the DNA replication initiation complex once per cell cycle. Binds the DnaA box (a 9 base pair repeat at the origin) and separates the double-stranded (ds)DNA. Forms a right-handed helical filament on oriC DNA; dsDNA binds to the exterior of the filament while single-stranded (ss)DNA is stabiized in the filament's interior. The ATP-DnaA-oriC complex binds and stabilizes one strand of the AT-rich DNA unwinding element (DUE), permitting loading of DNA polymerase. After initiation quickly degrades to an ADP-DnaA complex that is not apt for DNA replication. Binds acidic phospholipids. In Flavobacterium psychrophilum (strain ATCC 49511 / DSM 21280 / CIP 103535 / JIP02/86), this protein is Chromosomal replication initiator protein DnaA.